Reading from the N-terminus, the 256-residue chain is Cysteine-rich repeat secretory protein 29 (256 aa).

The signal sequence occupies residues 1-26 (MSSVFGSVHILAMIAIQLLLIHSVSS). 2 consecutive Gnk2-homologous domains span residues 33 to 136 (YLHH…SVAS) and 142 to 253 (YEND…LYPF).

Belongs to the cysteine-rich repeat secretory protein family.

It is found in the secreted. The polypeptide is Cysteine-rich repeat secretory protein 29 (CRRSP29) (Arabidopsis thaliana (Mouse-ear cress)).